Here is a 316-residue protein sequence, read N- to C-terminus: tRNA pseudouridine synthase B (316 aa).

Residue Asp47 is the Nucleophile of the active site.

The protein belongs to the pseudouridine synthase TruB family. Type 1 subfamily.

It carries out the reaction uridine(55) in tRNA = pseudouridine(55) in tRNA. Its function is as follows. Responsible for synthesis of pseudouridine from uracil-55 in the psi GC loop of transfer RNAs. This is tRNA pseudouridine synthase B from Photobacterium profundum (strain SS9).